The primary structure comprises 141 residues: Hemoglobin subunit alpha-A (141 aa).

Residues Val-1–Arg-141 enclose the Globin domain. His-58 is an O2 binding site. His-87 is a binding site for heme b.

Belongs to the globin family. As to quaternary structure, heterotetramer of two alpha chains and two beta chains. Red blood cells.

Its function is as follows. Involved in oxygen transport from the lung to the various peripheral tissues. This Chrysemys picta bellii (Western painted turtle) protein is Hemoglobin subunit alpha-A (HBAA).